A 130-amino-acid chain; its full sequence is Small ribosomal subunit protein uS9 (130 aa).

This sequence belongs to the universal ribosomal protein uS9 family.

The sequence is that of Small ribosomal subunit protein uS9 from Geobacillus thermodenitrificans (strain NG80-2).